Here is a 579-residue protein sequence, read N- to C-terminus: CTP synthase (579 aa).

An amidoligase domain region spans residues 1–281 (MPALRKHPQT…DAYVVRRLNL (281 aa)). S23 contributes to the CTP binding site. Position 23 (S23) interacts with UTP. Residues 24–29 (SLGKGL) and D81 each bind ATP. Positions 81 and 155 each coordinate Mg(2+). CTP-binding positions include 162–164 (DIE), 202–207 (KTKPTQ), and K238. Residues 202–207 (KTKPTQ) and K238 contribute to the UTP site. The Glutamine amidotransferase type-1 domain occupies 306–554 (RIALVGKYID…IGAALDYKAA (249 aa)). G369 provides a ligand contact to L-glutamine. C396 serves as the catalytic Nucleophile; for glutamine hydrolysis. L-glutamine contacts are provided by residues 397–400 (LGLQ), E419, and R480. Active-site residues include H527 and E529.

The protein belongs to the CTP synthase family. As to quaternary structure, homotetramer.

The enzyme catalyses UTP + L-glutamine + ATP + H2O = CTP + L-glutamate + ADP + phosphate + 2 H(+). It carries out the reaction L-glutamine + H2O = L-glutamate + NH4(+). It catalyses the reaction UTP + NH4(+) + ATP = CTP + ADP + phosphate + 2 H(+). Its pathway is pyrimidine metabolism; CTP biosynthesis via de novo pathway; CTP from UDP: step 2/2. Allosterically activated by GTP, when glutamine is the substrate; GTP has no effect on the reaction when ammonia is the substrate. The allosteric effector GTP functions by stabilizing the protein conformation that binds the tetrahedral intermediate(s) formed during glutamine hydrolysis. Inhibited by the product CTP, via allosteric rather than competitive inhibition. Its function is as follows. Catalyzes the ATP-dependent amination of UTP to CTP with either L-glutamine or ammonia as the source of nitrogen. Regulates intracellular CTP levels through interactions with the four ribonucleotide triphosphates. This is CTP synthase from Mycobacterium sp. (strain KMS).